The following is a 148-amino-acid chain: Universal stress protein YxiE (148 aa).

Positions 1–18 are cleaved as a signal peptide; that stretch reads MFNKMLVAIDGSDMSAKA.

The protein belongs to the universal stress protein A family.

This chain is Universal stress protein YxiE (yxiE), found in Bacillus subtilis (strain 168).